The following is a 251-amino-acid chain: MNKIKRLFINKKKNILNIYFTAGYPSIDSMPLILKRLQNLNIDIVEIGIPYSDPLADGNIIQKSNTKSLKNGMNISVLFYKLKKVKKYINIPIILMGYYNQFIKYGEIKFLEDCIESGVSGLILPDLPPRIYLNKYKKIFKKSKLAFIVLITPQTSLKRLKRLSSITDYFLYIVSSNSTTGTKNNINLSFLERIKEINVPKLIGFGICDKKSLNIAFKYAEGAIIGSAFIKAIKKSYLEKSIEKFIKYIIK.

Catalysis depends on proton acceptor residues glutamate 46 and aspartate 57.

This sequence belongs to the TrpA family. As to quaternary structure, tetramer of two alpha and two beta chains.

The enzyme catalyses (1S,2R)-1-C-(indol-3-yl)glycerol 3-phosphate + L-serine = D-glyceraldehyde 3-phosphate + L-tryptophan + H2O. It participates in amino-acid biosynthesis; L-tryptophan biosynthesis; L-tryptophan from chorismate: step 5/5. Functionally, the alpha subunit is responsible for the aldol cleavage of indoleglycerol phosphate to indole and glyceraldehyde 3-phosphate. The protein is Tryptophan synthase alpha chain of Karelsulcia muelleri (strain GWSS) (Sulcia muelleri).